A 585-amino-acid chain; its full sequence is Arginine--tRNA ligase (585 aa).

A 'HIGH' region motif is present at residues 131–141 (ANPTGPMHVGH).

Belongs to the class-I aminoacyl-tRNA synthetase family. Monomer.

The protein resides in the cytoplasm. The enzyme catalyses tRNA(Arg) + L-arginine + ATP = L-arginyl-tRNA(Arg) + AMP + diphosphate. The chain is Arginine--tRNA ligase from Allorhizobium ampelinum (strain ATCC BAA-846 / DSM 112012 / S4) (Agrobacterium vitis (strain S4)).